The primary structure comprises 142 residues: Ribosome-binding factor A (142 aa).

The span at 120-130 (EVRRDIDHAPA) shows a compositional bias: basic and acidic residues. The disordered stretch occupies residues 120-142 (EVRRDIDHAPAEDEFPTDGDDGQ). A compositionally biased stretch (acidic residues) spans 131 to 142 (EDEFPTDGDDGQ).

Belongs to the RbfA family. In terms of assembly, monomer. Binds 30S ribosomal subunits, but not 50S ribosomal subunits or 70S ribosomes.

The protein resides in the cytoplasm. Functionally, one of several proteins that assist in the late maturation steps of the functional core of the 30S ribosomal subunit. Associates with free 30S ribosomal subunits (but not with 30S subunits that are part of 70S ribosomes or polysomes). Required for efficient processing of 16S rRNA. May interact with the 5'-terminal helix region of 16S rRNA. This Paramagnetospirillum magneticum (strain ATCC 700264 / AMB-1) (Magnetospirillum magneticum) protein is Ribosome-binding factor A.